The following is a 325-amino-acid chain: Protease HtpX homolog (325 aa).

Residues 20–40 (IGYLLGGGGGMMIALVIAVAM) form a helical membrane-spanning segment. His130 provides a ligand contact to Zn(2+). Glu131 is a catalytic residue. A Zn(2+)-binding site is contributed by His134. 2 helical membrane-spanning segments follow: residues 145-165 (IVAT…FLGG) and 173-193 (VMGV…AMIV). Zn(2+) is bound at residue Glu202. The tract at residues 288–325 (AMTARAAAPSQNSGPWGQRSDNAGGNSNGGSRYRGPWS) is disordered. Over residues 306-325 (RSDNAGGNSNGGSRYRGPWS) the composition is skewed to low complexity.

It belongs to the peptidase M48B family. It depends on Zn(2+) as a cofactor.

Its subcellular location is the cell inner membrane. The polypeptide is Protease HtpX homolog (Brucella abortus (strain S19)).